The following is a 629-amino-acid chain: tRNA uridine 5-carboxymethylaminomethyl modification enzyme MnmG (629 aa).

13 to 18 (GGGHAG) is a binding site for FAD. 273–287 (GPRYCPSIEDKIVRF) contributes to the NAD(+) binding site.

It belongs to the MnmG family. In terms of assembly, homodimer. Heterotetramer of two MnmE and two MnmG subunits. FAD serves as cofactor.

The protein resides in the cytoplasm. Its function is as follows. NAD-binding protein involved in the addition of a carboxymethylaminomethyl (cmnm) group at the wobble position (U34) of certain tRNAs, forming tRNA-cmnm(5)s(2)U34. This chain is tRNA uridine 5-carboxymethylaminomethyl modification enzyme MnmG, found in Marinomonas sp. (strain MWYL1).